The following is a 262-amino-acid chain: Acyl-coenzyme A diphosphatase FITM2 (262 aa).

The Cytoplasmic portion of the chain corresponds to 1 to 23; it reads MEHLERCEWLLRGTLVRAAVRRY. The chain crosses the membrane as a helical span at residues 24-44; it reads LPWALVASMLAGSLLKELSPL. Topologically, residues 45-57 are lumenal; sequence PESYLSNKRNVLN. The helical transmembrane segment at 58-78 threads the bilayer; sequence VYFVKVAWAWTFCLLLPFIAL. The Cytoplasmic portion of the chain corresponds to 79-93; that stretch reads TNYHLTGKAGLVLRR. Residues 94-114 form a helical membrane-spanning segment; that stretch reads LSTLLVGTAIWYICTSIFSNI. Residues 115-145 are Lumenal-facing; sequence EHYTGSCYQSPALEGVRKEHQSKQQCHQEGG. A helical membrane pass occupies residues 146-166; that stretch reads FWHGFDISGHSFLLTFCALMI. His155 is a catalytic residue. Residues 167 to 190 lie on the Cytoplasmic side of the membrane; the sequence is VEEMSVLHEVKTDRSHCLHTAITT. The helical transmembrane segment at 191–211 threads the bilayer; sequence LVVALGILTFIWVLMFLCTAV. Over 212–218 the chain is Lumenal; sequence YFHNLSQ. The active site involves His214. Residues 219-239 form a helical membrane-spanning segment; the sequence is KVFGTLFGLLSWYGTYGFWYP. Residues 240-262 are Cytoplasmic-facing; the sequence is KAFSPGLPPQSCSLNLKQDSYKK.

Belongs to the FIT family. FIT2 subfamily. As to expression, widely expressed.

It is found in the endoplasmic reticulum membrane. It catalyses the reaction an acyl-CoA + H2O = an acyl-4'-phosphopantetheine + adenosine 3',5'-bisphosphate + 2 H(+). The enzyme catalyses (9Z)-octadecenoyl-CoA + H2O = S-(9Z-octadecenoyl)-4'-phosphopantetheine + adenosine 3',5'-bisphosphate + 2 H(+). It carries out the reaction (5Z,8Z,11Z,14Z)-eicosatetraenoyl-CoA + H2O = S-(5Z,8Z,11Z,14Z-eicosatetraenoyl)-4'-phosphopantetheine + adenosine 3',5'-bisphosphate + 2 H(+). The catalysed reaction is hexadecanoyl-CoA + H2O = S-hexadecanoyl-4'-phosphopantetheine + adenosine 3',5'-bisphosphate + 2 H(+). In terms of biological role, fatty acyl-coenzyme A (CoA) diphosphatase that hydrolyzes fatty acyl-CoA to yield acyl-4'-phosphopantetheine and adenosine 3',5'-bisphosphate. Preferentially hydrolyzes unsaturated long-chain acyl-CoA substrates such as oleoyl-CoA/(9Z)-octadecenoyl-CoA and arachidonoyl-CoA/(5Z,8Z,11Z,14Z)-eicosatetraenoyl-CoA in the endoplasmic reticulum (ER) lumen. This catalytic activity is required for maintaining ER structure and for lipid droplets (LDs) biogenesis, which are lipid storage organelles involved in maintaining lipid and energy homeostasis. Directly binds to diacylglycerol (DAGs) and triacylglycerol, which is also important for LD biogenesis. May support directional budding of nacent LDs from the ER into the cytosol by reducing DAG levels at sites of LD formation. Plays a role in the regulation of cell morphology and cytoskeletal organization. The chain is Acyl-coenzyme A diphosphatase FITM2 from Homo sapiens (Human).